We begin with the raw amino-acid sequence, 390 residues long: Magnesium-protoporphyrin IX monomethyl ester [oxidative] cyclase (390 aa).

The interval Met1 to Pro20 is disordered.

It belongs to the AcsF family. Requires Fe cation as cofactor.

It carries out the reaction Mg-protoporphyrin IX 13-monomethyl ester + 3 NADPH + 3 O2 + 2 H(+) = 3,8-divinyl protochlorophyllide a + 3 NADP(+) + 5 H2O. It participates in porphyrin-containing compound metabolism; chlorophyll biosynthesis (light-independent). Functionally, catalyzes the formation of the isocyclic ring in chlorophyll biosynthesis. Mediates the cyclase reaction, which results in the formation of divinylprotochlorophyllide (Pchlide) characteristic of all chlorophylls from magnesium-protoporphyrin IX 13-monomethyl ester (MgPMME). In Prochlorococcus marinus (strain MIT 9301), this protein is Magnesium-protoporphyrin IX monomethyl ester [oxidative] cyclase.